Here is a 245-residue protein sequence, read N- to C-terminus: 1-(5-phosphoribosyl)-5-[(5-phosphoribosylamino)methylideneamino] imidazole-4-carboxamide isomerase (245 aa).

Catalysis depends on D7, which acts as the Proton acceptor. D129 serves as the catalytic Proton donor.

The protein belongs to the HisA/HisF family.

It localises to the cytoplasm. The catalysed reaction is 1-(5-phospho-beta-D-ribosyl)-5-[(5-phospho-beta-D-ribosylamino)methylideneamino]imidazole-4-carboxamide = 5-[(5-phospho-1-deoxy-D-ribulos-1-ylimino)methylamino]-1-(5-phospho-beta-D-ribosyl)imidazole-4-carboxamide. Its pathway is amino-acid biosynthesis; L-histidine biosynthesis; L-histidine from 5-phospho-alpha-D-ribose 1-diphosphate: step 4/9. The chain is 1-(5-phosphoribosyl)-5-[(5-phosphoribosylamino)methylideneamino] imidazole-4-carboxamide isomerase from Edwardsiella ictaluri (strain 93-146).